The sequence spans 780 residues: ATP-dependent 6-phosphofructokinase, muscle type (780 aa).

N-acetylthreonine is present on Thr-2. The tract at residues Thr-2–His-390 is N-terminal catalytic PFK domain 1. ATP-binding positions include Gly-25, Arg-88–Cys-89, and Gly-118–Ser-121. Residue Asp-119 participates in Mg(2+) binding. The residue at position 133 (Ser-133) is a Phosphoserine. Substrate is bound by residues Ser-164–Asp-166, Arg-201, Met-208–Arg-210, Glu-264, Arg-292, and His-298–Arg-301. Asp-166 (proton acceptor) is an active-site residue. Ser-377 is modified (phosphoserine). The segment at Val-391–His-401 is interdomain linker. The C-terminal regulatory PFK domain 2 stretch occupies residues Thr-402 to Val-780. Residues Arg-471 and Thr-528–Asn-532 each bind beta-D-fructose 2,6-bisphosphate. A glycan (O-linked (GlcNAc) serine) is linked at Ser-530. Residue Lys-557 is modified to N6-(2-hydroxyisobutyryl)lysine. Beta-D-fructose 2,6-bisphosphate is bound by residues Arg-566, Met-573–Gly-575, Glu-629, Arg-655, and His-661–Gln-664. Ser-667 carries the post-translational modification Phosphoserine. Beta-D-fructose 2,6-bisphosphate is bound at residue Arg-735. Phosphoserine is present on Ser-775.

This sequence belongs to the phosphofructokinase type A (PFKA) family. ATP-dependent PFK group I subfamily. Eukaryotic two domain clade 'E' sub-subfamily. Homo- and heterotetramers. Phosphofructokinase (PFK) enzyme functions as a tetramer composed of different combinations of 3 types of subunits, called PFKM (where M stands for Muscle), PFKL (Liver) and PFKP (Platelet). The composition of the PFK tetramer differs according to the tissue type it is present in. In muscles, it is composed of 4 PFKM subunits (also called M4). In the liver, the predominant form is a tetramer of PFKL subunits (L4). In erythrocytes, both PFKM and PFKL subunits randomly tetramerize to form M4, L4 and other combinations (ML3, M2L2, M3L). The kinetic and regulatory properties of the tetrameric enzyme are dependent on the subunit composition, hence can vary across tissues. Interacts (via C-terminus) with HK1 (via N-terminal spermatogenic cell-specific region). Mg(2+) serves as cofactor. In terms of processing, glcNAcylation decreases enzyme activity.

The protein localises to the cytoplasm. The catalysed reaction is beta-D-fructose 6-phosphate + ATP = beta-D-fructose 1,6-bisphosphate + ADP + H(+). The protein operates within carbohydrate degradation; glycolysis; D-glyceraldehyde 3-phosphate and glycerone phosphate from D-glucose: step 3/4. Allosterically activated by ADP, AMP, or fructose 2,6-bisphosphate, and allosterically inhibited by ATP or citrate. Functionally, catalyzes the phosphorylation of D-fructose 6-phosphate to fructose 1,6-bisphosphate by ATP, the first committing step of glycolysis. This is ATP-dependent 6-phosphofructokinase, muscle type (PFKM) from Homo sapiens (Human).